The chain runs to 282 residues: 3-oxoadipate CoA-transferase subunit A (282 aa).

This sequence belongs to the 3-oxoacid CoA-transferase subunit A family. In terms of assembly, heterotetramer composed of 2 A and 2 B subunits.

It carries out the reaction 3-oxoadipate + succinyl-CoA = 3-oxoadipyl-CoA + succinate. Its pathway is aromatic compound metabolism; beta-ketoadipate pathway; acetyl-CoA and succinyl-CoA from 3-oxoadipate: step 1/2. Its function is as follows. Catalyzes the CoA transfer from succinate to 3-oxoadipate (beta-ketoadipate). The protein is 3-oxoadipate CoA-transferase subunit A (catI) of Pseudomonas knackmussii (strain DSM 6978 / CCUG 54928 / LMG 23759 / B13).